A 622-amino-acid polypeptide reads, in one-letter code: tRNA uridine 5-carboxymethylaminomethyl modification enzyme MnmG (622 aa).

An FAD-binding site is contributed by 10-15; it reads GGGHAG. 269 to 283 contributes to the NAD(+) binding site; the sequence is GPRYCPSVEDKIVKF.

The protein belongs to the MnmG family. As to quaternary structure, homodimer. Heterotetramer of two MnmE and two MnmG subunits. FAD is required as a cofactor.

The protein resides in the cytoplasm. NAD-binding protein involved in the addition of a carboxymethylaminomethyl (cmnm) group at the wobble position (U34) of certain tRNAs, forming tRNA-cmnm(5)s(2)U34. The protein is tRNA uridine 5-carboxymethylaminomethyl modification enzyme MnmG of Bartonella quintana (strain Toulouse) (Rochalimaea quintana).